The sequence spans 1143 residues: Probable ATP-dependent RNA helicase DHX34 (1143 aa).

2 disordered regions span residues 1 to 24 (MPPP…EEEA) and 75 to 94 (TSRK…PALA). The segment covering 76–85 (SRKEEKDPGQ) has biased composition (basic and acidic residues). The Helicase ATP-binding domain occupies 172-332 (LQTLKEHQVV…FSNAPVVQVP (161 aa)). 185 to 192 (GDTGCGKS) is a binding site for ATP. Residues 279–282 (DEVH) carry the DEAH box motif. The Helicase C-terminal domain occupies 368-536 (SIDHKYPPEE…SLVLQMKSMS (169 aa)). The segment at 701 to 955 (QAAQVGDSYS…LRARWESALD (255 aa)) is negatively regulates interaction with UPF1. A disordered region spans residues 724–766 (LKRQHEEGAGRRRKVLRLQEEQDGGSSDEDRAGPAPPGASDGV). Phosphoserine occurs at positions 749 and 750. A required for phosphorylation of UPF1. Not required for interaction with UPF1 region spans residues 810 to 1143 (PQLAVPDAFN…EVLRHRKQHV (334 aa)). The segment at 957–1143 (QLAHQAQQQL…EVLRHRKQHV (187 aa)) is required for the interaction with SMG1 and subsequent phosphorylation of UPF1.

Belongs to the DEAD box helicase family. DEAH subfamily. Forms a complex with RUVBL1 and RUVBL2. Part of a complex composed of SMG1, DHX34 and UPF1; within the complex DHX34 acts as a scaffolding protein to facilitate SMG1 phosphorylation of UPF1. Interacts with UPF1, MOV10, EIF4A3, XRN2, SMG6, SMG7, SMG9, UPF3A, UPF3B, CASC3/MLN51, XRN1, DIS3 and DCP1A; the interactions are RNA-independent. Interacts with NCBP1/CPB80; the interaction is RNA-dependent. Interacts (via C-terminus) with SMG1; the interaction is RNA-independent. As to expression, expressed in whole blood, testis and spleen. Also expressed in the brain.

The enzyme catalyses ATP + H2O = ADP + phosphate + H(+). Its function is as follows. Probable ATP-binding RNA helicase required for nonsense-mediated decay (NMD) degradation of mRNA transcripts containing premature stop codons. Promotes the phosphorylation of UPF1 along with its interaction with key NMD pathway proteins UPF2 and EIF4A3. Interaction with the RUVBL1-RUVBL2 complex results in loss of nucleotide binding ability and ATP hydrolysis of the complex. Negatively regulates the nucleotide binding ability and ATP hydrolysis of the RUVBL1-RUVBL2 complex via induction of N-terminus conformation changes of the RUVBL2 subunits. This is Probable ATP-dependent RNA helicase DHX34 from Homo sapiens (Human).